A 193-amino-acid polypeptide reads, in one-letter code: Protein SPEAR3 (193 aa).

2 disordered regions span residues 1 to 50 and 85 to 104; these read MGSS…GVAQ and GYPSIPSSSPSFSYASSSPP. The segment covering 14-26 has biased composition (low complexity); that stretch reads SSSSSPTSSSSSP. Positions 44-52 match the SPL motif; the sequence is RGLGVAQLE. The segment covering 86–101 has biased composition (low complexity); that stretch reads YPSIPSSSPSFSYASS. The short motif at 187–193 is the EAR element; sequence LDLELRL.

In terms of assembly, interacts with TPL and the TPR corepressors TPR1, TPR2, TPR3, TPR4, and with the TCP transcription factors TCP2, TCP3, TCP4, TCP5, TCP10, TCP13, TCP17 and TCP24. Interacts with SPL and SPEAR2. Expressed in shoot apical meristem, cotyledons and leaves. Detected at the leaf margins and in the vascular bundles at the base of the leaves.

Its subcellular location is the nucleus. Functionally, transcriptional regulator of leaf development. Acts as an adapter-like transcriptional repressor recruiting TPL/TPR corepressors to inhibit the CIN-like TCP transcription factors. This is Protein SPEAR3 from Arabidopsis thaliana (Mouse-ear cress).